Here is a 533-residue protein sequence, read N- to C-terminus: Bifunctional aspartate aminotransferase and L-aspartate beta-decarboxylase (533 aa).

The L-aspartate site is built by Gly115 and Asn256. Position 315 is an N6-(pyridoxal phosphate)lysine (Lys315). Arg497 is a binding site for L-aspartate.

The protein belongs to the class-I pyridoxal-phosphate-dependent aminotransferase family. As to quaternary structure, homododecamer. Requires pyridoxal 5'-phosphate as cofactor.

It catalyses the reaction L-aspartate + H(+) = L-alanine + CO2. It carries out the reaction L-aspartate + 2-oxoglutarate = oxaloacetate + L-glutamate. Functionally, bifunctional enzyme that has both L-aspartate decarboxylase and transaminase activity. The polypeptide is Bifunctional aspartate aminotransferase and L-aspartate beta-decarboxylase (Comamonas testosteroni (Pseudomonas testosteroni)).